The sequence spans 213 residues: MGSNYIVIEGLEGAGKTTARDVVVETLEQLGIRNMIFTREPGGTQLAEKLRSLVLDIRSVGDEVITDKAEVLMFYAARVQLVETVIKPALAQGVWVIGDRHDLSTQAYQGGGRGIDQTMLATLRDAVLGDFRPDLTLYLDVTPEVGLKRARARGDLDRIEQESFDFFNRTRARYLELAAQDPRIRTIDATQPLDAVMRDIRATVTTWVQGQAA.

Residue 10-17 coordinates ATP; the sequence is GLEGAGKT.

This sequence belongs to the thymidylate kinase family.

It catalyses the reaction dTMP + ATP = dTDP + ADP. In terms of biological role, phosphorylation of dTMP to form dTDP in both de novo and salvage pathways of dTTP synthesis. The sequence is that of Thymidylate kinase from Salmonella arizonae (strain ATCC BAA-731 / CDC346-86 / RSK2980).